The following is a 422-amino-acid chain: MILPKRTQEKEISLLMHYLDEVFPLQFPFHERRYVGKREWLLTILASTRPVYYATLSLSLLHKEACLHEFEAELAEIWQKEKMRYYILALQESQQQLDALDTAYGIAKMKGNIHALASTLQLISFESSSLSKGDWQLHLRAGTSLIPVLIDGWAVALKSDKVASSSSLWTELDASDFNATHDEDSLSYEYVGALKFFANVLAMFGIFSCISIGPSSPFMEYRFLMDQAGLIQMDQIMGCRNWAMLAILEIGTLDKWKREEQENRRLSLKALTSRAMAIEGVLESGLREASGSALVDLITSIYATSALTYLHTVVSGLNPNLSEVQESVAATIVLLKRLPDLRAAKSLVWPLGVTGCMASRSQEDFFRGLIISAGATPRALRNCWGLMKVWEDTWKMREYMSKQPPERWEEVVSGQGPPMLLM.

Belongs to the TRI10 transcription regulator family.

The protein resides in the nucleus. In terms of biological role, transcriptional activator of all of the trichothecene biosynthesis genes. Acts upstream of the cluster-encoded transcription factor TRI6 and is necessary for full expression of both the other trichothecene genes and the genes for the primary metabolic pathway that precedes the trichothecene biosynthetic pathway. This is Trichothecene biosynthesis transcription regulator TRI10 from Trichoderma arundinaceum.